The sequence spans 457 residues: PDZ and LIM domain protein 7 (457 aa).

In terms of domain architecture, PDZ spans 1–85 (MDSFKVVLEG…RLSLGLSRAQ (85 aa)). Position 78 is a phosphoserine (S78). Disordered stretches follow at residues 82–166 (SRAQ…QSRS) and 186–226 (FMKK…PWAV). At T96 the chain carries Phosphothreonine. R103 is subject to Asymmetric dimethylarginine. Phosphoserine is present on S111. Positions 126-135 (DSTLRQNGQL) are enriched in polar residues. Over residues 144-157 (SKQRLMEDTEDWRP) the composition is skewed to basic and acidic residues. S247 is modified (phosphoserine). 3 consecutive LIM zinc-binding domains span residues 280-338 (PVCH…VRYA), 339-398 (PNCA…MFGT), and 399-457 (KCRG…FSHV).

As to quaternary structure, specifically binds via its LIM zinc-binding 3 domain (LIM 3) domain to endocytic codes of INSR, but not with those of IGF1R, LDLR, TFRC, or EGFR. Interacts with various PKC isoforms through the LIM zinc-binding domains. Binds to RET in a phosphorylation-independent manner via its LIM zinc-binding domain 2 (LIM 2). Probably part of a complex with SHC and the RET dimer. Interacts with TPM2, TBX4 and TBX5.

It localises to the cytoplasm. It is found in the cytoskeleton. May function as a scaffold on which the coordinated assembly of proteins can occur. May play a role as an adapter that, via its PDZ domain, localizes LIM-binding proteins to actin filaments of both skeletal muscle and nonmuscle tissues. Involved in both of the two fundamental mechanisms of bone formation, direct bone formation (e.g. embryonic flat bones mandible and cranium), and endochondral bone formation (e.g. embryonic long bone development). Plays a role during fracture repair. Involved in BMP6 signaling pathway. This Mus musculus (Mouse) protein is PDZ and LIM domain protein 7 (Pdlim7).